Consider the following 569-residue polypeptide: Urease subunit alpha (569 aa).

The Urease domain occupies 131 to 569; it reads GGIDAHIHFI…VPMAQRYFLF (439 aa). Positions 136, 138, and 219 each coordinate Ni(2+). K219 is subject to N6-carboxylysine. H221 contacts substrate. Ni(2+) is bound by residues H248 and H274. Residue H322 is the Proton donor of the active site. D362 is a Ni(2+) binding site.

The protein belongs to the metallo-dependent hydrolases superfamily. Urease alpha subunit family. Heterotrimer of UreA (gamma), UreB (beta) and UreC (alpha) subunits. Three heterotrimers associate to form the active enzyme. The cofactor is Ni cation. In terms of processing, carboxylation allows a single lysine to coordinate two nickel ions.

Its subcellular location is the cytoplasm. It catalyses the reaction urea + 2 H2O + H(+) = hydrogencarbonate + 2 NH4(+). It functions in the pathway nitrogen metabolism; urea degradation; CO(2) and NH(3) from urea (urease route): step 1/1. The polypeptide is Urease subunit alpha (Bacillus sp. (strain TB-90)).